We begin with the raw amino-acid sequence, 512 residues long: Putative B3 domain-containing protein REM4 (512 aa).

Residues 11 to 103 constitute a DNA-binding region (TF-B3 1); sequence NKAFFIIDLS…VFHVSPFGRS (93 aa). The tract at residues 111 to 145 is disordered; the sequence is SSSTSDDDDDERTVFDDDEDDDVGDDDDNSISEDD. Residues 115-145 are compositionally biased toward acidic residues; that stretch reads SDDDDDERTVFDDDEDDDVGDDDDNSISEDD. 2 DNA-binding regions (TF-B3) span residues 169 to 265 and 307 to 403; these read YLVA…LCPN and ILTF…CSKV. Residues 408 to 465 form a disordered region; the sequence is SSDGHKTADRKPRMTDQAPLAEEQTDNRVEKRAQVTEEGGPSRSTRADPGNLQQKQPC. 2 stretches are compositionally biased toward basic and acidic residues: residues 410 to 421 and 432 to 442; these read DGHKTADRKPRM and TDNRVEKRAQV.

It localises to the nucleus. This is Putative B3 domain-containing protein REM4 (REM4) from Arabidopsis thaliana (Mouse-ear cress).